The chain runs to 296 residues: Nitrogenase iron protein (296 aa).

Residue 12-19 coordinates ATP; sequence GKGGIGKS. Cys100 provides a ligand contact to [4Fe-4S] cluster. Residue Arg103 is modified to ADP-ribosylarginine; by dinitrogenase reductase ADP-ribosyltransferase. Cys134 provides a ligand contact to [4Fe-4S] cluster.

It belongs to the NifH/BchL/ChlL family. Homodimer. [4Fe-4S] cluster serves as cofactor. The reversible ADP-ribosylation of Arg-103 inactivates the nitrogenase reductase and regulates nitrogenase activity.

The catalysed reaction is N2 + 8 reduced [2Fe-2S]-[ferredoxin] + 16 ATP + 16 H2O = H2 + 8 oxidized [2Fe-2S]-[ferredoxin] + 2 NH4(+) + 16 ADP + 16 phosphate + 6 H(+). In terms of biological role, the key enzymatic reactions in nitrogen fixation are catalyzed by the nitrogenase complex, which has 2 components: the iron protein and the molybdenum-iron protein. The protein is Nitrogenase iron protein of Acidithiobacillus ferrooxidans (strain ATCC 23270 / DSM 14882 / CIP 104768 / NCIMB 8455) (Ferrobacillus ferrooxidans (strain ATCC 23270)).